Reading from the N-terminus, the 727-residue chain is Glycerol-3-phosphate dehydrogenase, mitochondrial (727 aa).

The transit peptide at 1–42 (MAFQKAVKGTILVGGGALATVLGLSPFAHYRRKQVSLAYVEA) directs the protein to the mitochondrion. 71–99 (DILVIGGGATGCGCALDAVTRGLKTALVE) is an FAD binding site. Tyrosine 601 carries the phosphotyrosine modification. EF-hand domains lie at 623–658 (SDIDRYKKRFHKFDEDEKGFITIVDVQRVLESINVQ) and 659–694 (MDENTLHEILCEVDLNKNGQVELHEFLQLMSAVQKG). Ca(2+)-binding residues include aspartate 672, asparagine 674, asparagine 676, glutamine 678, and glutamate 683.

The protein belongs to the FAD-dependent glycerol-3-phosphate dehydrogenase family. Requires FAD as cofactor.

It localises to the mitochondrion inner membrane. It carries out the reaction a quinone + sn-glycerol 3-phosphate = dihydroxyacetone phosphate + a quinol. It functions in the pathway polyol metabolism; glycerol degradation via glycerol kinase pathway; glycerone phosphate from sn-glycerol 3-phosphate (anaerobic route): step 1/1. Calcium-binding enhance the activity of the enzyme. Functionally, calcium-responsive mitochondrial glycerol-3-phosphate dehydrogenase which seems to be a key component of the pancreatic beta-cell glucose-sensing device. This is Glycerol-3-phosphate dehydrogenase, mitochondrial from Mus musculus (Mouse).